Consider the following 532-residue polypeptide: MTEPRVNPNCRLEDQGITGLGNVHYNLLEPALIDAAIQRGEGKLGLGGTFLVSTGAHTGRSPKDKHVVRTPAVEDSIWWENNRPMEPEAFDRLHADMLEHMKGKDYFVQDLYGGADPALRLDVRVVTELAWHGLFIRNLLRRPEASELAGFLPEFTIINCPSFKADPARHGCRSETVIALNFDKKLILIGNTAYAGENKKSVFTLLNYILPEKGVMPMHCSANHALGNPNDSAIFFGLSGTGKTTLSADPSRTLIGDDEHGWSDNGIFNFEGGCYAKTINLSAEAEPEIYATCFKFGTVIENMVYDPDTLELDFEDNSLTDNMRCAYPLEQISNASETSLGGQPRNVIMLTCDAYGVLPPIARLTPAQAMYHFLSGFTSKTPGTEVGVTEPTPTFSTCFGAPFMPRRPEVYGKLLQEKIAKTGAACWLVNTGWTGGAFGTGKRMPIKATRALLTAALDGSLNDAQFRKDPNFGFEVPVSVPGVEDKLLDPRQTWTDGAAYDAQARKLVGMFSDNFAQYADKIDDDVRAAAIG.

Residues arginine 60, tyrosine 194, and lysine 200 each coordinate substrate. ATP contacts are provided by residues lysine 200, histidine 219, and 237-245 (GLSGTGKTT). Lysine 200 and histidine 219 together coordinate Mn(2+). Aspartate 258 contacts Mn(2+). 3 residues coordinate ATP: glutamate 286, arginine 324, and threonine 449. Arginine 324 is a binding site for substrate.

Belongs to the phosphoenolpyruvate carboxykinase (ATP) family. Requires Mn(2+) as cofactor.

It localises to the cytoplasm. It carries out the reaction oxaloacetate + ATP = phosphoenolpyruvate + ADP + CO2. The protein operates within carbohydrate biosynthesis; gluconeogenesis. In terms of biological role, involved in the gluconeogenesis. Catalyzes the conversion of oxaloacetate (OAA) to phosphoenolpyruvate (PEP) through direct phosphoryl transfer between the nucleoside triphosphate and OAA. The protein is Phosphoenolpyruvate carboxykinase (ATP) of Paracoccus denitrificans (strain Pd 1222).